The sequence spans 463 residues: 23S rRNA (uracil(1939)-C(5))-methyltransferase RlmD (463 aa).

One can recognise a TRAM domain in the interval Arg8–Glu76. [4Fe-4S] cluster is bound by residues Cys90, Cys96, Cys99, and Cys178. S-adenosyl-L-methionine contacts are provided by Gln288, Phe317, Asn322, Glu341, Asp368, and Asp389. The Nucleophile role is filled by Cys415.

This sequence belongs to the class I-like SAM-binding methyltransferase superfamily. RNA M5U methyltransferase family. RlmD subfamily.

It carries out the reaction uridine(1939) in 23S rRNA + S-adenosyl-L-methionine = 5-methyluridine(1939) in 23S rRNA + S-adenosyl-L-homocysteine + H(+). Its function is as follows. Catalyzes the formation of 5-methyl-uridine at position 1939 (m5U1939) in 23S rRNA. The polypeptide is 23S rRNA (uracil(1939)-C(5))-methyltransferase RlmD (Acinetobacter baylyi (strain ATCC 33305 / BD413 / ADP1)).